Reading from the N-terminus, the 700-residue chain is Elongation factor G 2 (700 aa).

Positions 8–290 constitute a tr-type G domain; that stretch reads ERYRNIGISA…AVIDFLPSPV (283 aa). GTP contacts are provided by residues 17 to 24, 88 to 92, and 142 to 145; these read AHIDAGKT, DTPGH, and NKMD.

It belongs to the TRAFAC class translation factor GTPase superfamily. Classic translation factor GTPase family. EF-G/EF-2 subfamily.

Its subcellular location is the cytoplasm. Functionally, catalyzes the GTP-dependent ribosomal translocation step during translation elongation. During this step, the ribosome changes from the pre-translocational (PRE) to the post-translocational (POST) state as the newly formed A-site-bound peptidyl-tRNA and P-site-bound deacylated tRNA move to the P and E sites, respectively. Catalyzes the coordinated movement of the two tRNA molecules, the mRNA and conformational changes in the ribosome. The protein is Elongation factor G 2 of Burkholderia orbicola (strain AU 1054).